A 370-amino-acid chain; its full sequence is Forkhead box protein I1-A (370 aa).

3 disordered regions span residues 1–28 (MNPVQQPAQHKCPASSLNPPHPKRAQEA), 212–269 (DNGN…CPSP), and 342–370 (SSLPTSNQKQPPYLQQLHPQQSPLYQGRY). Residues 127 to 221 (RPPYSYSALI…DNGNFRRKRK (95 aa)) constitute a DNA-binding region (fork-head). The segment covering 232-245 (AKREEDHVSPKGKE) has biased composition (basic and acidic residues). Positions 349-370 (QKQPPYLQQLHPQQSPLYQGRY) are enriched in low complexity.

Initially localized to the animal hemisphere (the presumptive ectoderm) of early-mid blastula embryos. Becomes restricted to head placodes, excluding the otic placodes, by the tailbud stages.

It localises to the nucleus. Transcription factor. Essential for ventral specification of the early cephalic (head) ectoderm during gastrulation, playing a role in the non-neural versus neural cell fate choice. Binds to DNA via the target sequence 5'-[AG]TAAA[CT]A-3', with 5'-ATAAACA-3' being the preferred binding site. This chain is Forkhead box protein I1-A (foxi1-a), found in Xenopus laevis (African clawed frog).